A 625-amino-acid polypeptide reads, in one-letter code: Threonine--tRNA ligase (625 aa).

Residues 1–147 (MRMLLIHSDY…TIVPEEAKVE (147 aa)) are editing domain. The segment at 206-505 (PHVRLMLEHE…MQEGKKPMFP (300 aa)) is catalytic. Zn(2+) is bound by residues Cys-298, His-350, and His-474.

The protein belongs to the class-II aminoacyl-tRNA synthetase family. Homodimer. It depends on Zn(2+) as a cofactor.

It is found in the cytoplasm. The enzyme catalyses tRNA(Thr) + L-threonine + ATP = L-threonyl-tRNA(Thr) + AMP + diphosphate + H(+). Catalyzes the attachment of threonine to tRNA(Thr) in a two-step reaction: L-threonine is first activated by ATP to form Thr-AMP and then transferred to the acceptor end of tRNA(Thr). Also edits incorrectly charged L-seryl-tRNA(Thr). The chain is Threonine--tRNA ligase from Pyrococcus furiosus (strain ATCC 43587 / DSM 3638 / JCM 8422 / Vc1).